The chain runs to 493 residues: Keratin, type II cuticular Hb3 (493 aa).

Residues 1–111 form a head region; the sequence is MTCGFNSIGC…PNAQCVKQEE (111 aa). The 312-residue stretch at 111-422 folds into the IF rod domain; that stretch reads EKEQIKSLNS…RLLEGEEQRL (312 aa). A coil 1A region spans residues 112-146; sequence KEQIKSLNSRFAAFIDKVRFLEQQNKLLETKLQFY. Residues 147-156 are linker 1; that stretch reads QNRECCQSNL. The coil 1B stretch occupies residues 157–257; the sequence is EPLFAGYIET…YEEEIRILQS (101 aa). Lys-217 participates in a covalent cross-link: Glycyl lysine isopeptide (Lys-Gly) (interchain with G-Cter in SUMO1). The segment at 258 to 274 is linker 12; the sequence is HISDTSVVVKLDNSRDL. Positions 275–418 are coil 2; that stretch reads NMDCIVAEIK…ATYRRLLEGE (144 aa). The segment at 419 to 493 is tail; sequence EQRLCEGVEA…GGGSCGQGRH (75 aa).

It belongs to the intermediate filament family. As to quaternary structure, heterotetramer of two type I and two type II keratins. In terms of tissue distribution, synthesis begins in the cortex 10-15 cell layers above the apex of the dermal papilla and ends abruptly in the middle of the cortex.

The chain is Keratin, type II cuticular Hb3 (KRT83) from Homo sapiens (Human).